Consider the following 344-residue polypeptide: MTQAATRPTAEIGNEDILAVARRQVLEGGQGLSRDQVLQVLRLPDDRLDDLLALAHEVRMRWCGPEVEVEGIISLKTGGCPEDCHFCSQSGLFASPVRSARLDIPSLVEAAKQTAKSGATEFCIVAAVRGPDERLLAQVAAGIEAVRNEVEINIACSLGMLTAEQVEQLAEMGVHRYNHNLETARSFFPNVVTTHTWEERWDTLSMVRDAGMEVCCGGILGMGETLEQRAEFAAELAELGPDEVPLNFLNPRPGTPFGDLEVMPATEALKSVAAFRLALPRTMLRFAGGREITLGDLGAKKGILGGINAVIVGNYLTTLGRPAESDLELLDDLQMPLKGLNASL.

The region spanning 65–290 (PEVEVEGIIS…RTMLRFAGGR (226 aa)) is the Radical SAM core domain. C80, C84, and C87 together coordinate [4Fe-4S] cluster. 4 residues coordinate [2Fe-2S] cluster: C123, C156, C215, and R285.

It belongs to the radical SAM superfamily. Biotin synthase family. As to quaternary structure, homodimer. [4Fe-4S] cluster serves as cofactor. Requires [2Fe-2S] cluster as cofactor.

It catalyses the reaction (4R,5S)-dethiobiotin + (sulfur carrier)-SH + 2 reduced [2Fe-2S]-[ferredoxin] + 2 S-adenosyl-L-methionine = (sulfur carrier)-H + biotin + 2 5'-deoxyadenosine + 2 L-methionine + 2 oxidized [2Fe-2S]-[ferredoxin]. It participates in cofactor biosynthesis; biotin biosynthesis; biotin from 7,8-diaminononanoate: step 2/2. Functionally, catalyzes the conversion of dethiobiotin (DTB) to biotin by the insertion of a sulfur atom into dethiobiotin via a radical-based mechanism. This Mycolicibacterium paratuberculosis (strain ATCC BAA-968 / K-10) (Mycobacterium paratuberculosis) protein is Biotin synthase.